Reading from the N-terminus, the 558-residue chain is UvrABC system protein C (558 aa).

The 81-residue stretch at 12–92 (LLPGVYIFYG…IFNHKPKYNV (81 aa)) folds into the GIY-YIG domain. The 36-residue stretch at 200–235 (SETLDLIEEKMKKHAKMMDFENAAKYRDLLVKFENV) folds into the UVR domain.

Belongs to the UvrC family. Interacts with UvrB in an incision complex.

The protein resides in the cytoplasm. In terms of biological role, the UvrABC repair system catalyzes the recognition and processing of DNA lesions. UvrC both incises the 5' and 3' sides of the lesion. The N-terminal half is responsible for the 3' incision and the C-terminal half is responsible for the 5' incision. This is UvrABC system protein C from Pseudothermotoga lettingae (strain ATCC BAA-301 / DSM 14385 / NBRC 107922 / TMO) (Thermotoga lettingae).